A 251-amino-acid polypeptide reads, in one-letter code: uncharacterized protein (251 aa).

It belongs to the PaiB family.

This is an uncharacterized protein from Emericella nidulans (strain FGSC A4 / ATCC 38163 / CBS 112.46 / NRRL 194 / M139) (Aspergillus nidulans).